Consider the following 439-residue polypeptide: Magnesium-dependent glutamate N-prenyltransferase (439 aa).

4 residues coordinate Mg(2+): asparagine 322, threonine 326, glutamate 330, and phenylalanine 337.

The protein belongs to the terpene synthase family. Mg(2+) serves as cofactor.

It catalyses the reaction dimethylallyl diphosphate + L-glutamate = prekainate + diphosphate. It functions in the pathway secondary metabolite biosynthesis. In terms of biological role, magnesium-dependent glutamate N-prenyltransferase: part of the gene cluster that mediates the biosynthesis of kainic acid (KA) and derivatives, natural products with neurochemical activity acting as ionotropic glutamate receptor (iGluR) agonists, thus being neurotoxins. Catalyzes the conversion of L-glutamic acid (L-Glu) to prekainic acid in the presence of dimethylallyl diphosphate (DMAPP). Can also use geranyl diphosphate (GPP) as substrate, thus leading to the formation of N-geranyl-L-glutamic acid (L-NGG). This is Magnesium-dependent glutamate N-prenyltransferase from Digenea simplex (Marine red alga).